The chain runs to 120 residues: uncharacterized protein (120 aa).

Residues 1–22 (MSTSGMLFIFATFCPCFLSCCA) form the signal peptide. Residues 23–59 (FMSHWKLKDFSFRFLRMCGERSLVVCYPLKLLKQIRS) lie on the Extracellular side of the membrane. The chain crosses the membrane as a helical span at residues 60-80 (LFSIAIGHLSLMLIEGSANLL). Residues 81–120 (SLEEISRTLLRILDFVGNKNMRTYLEVPLCRWHISQARPN) lie on the Cytoplasmic side of the membrane.

Its subcellular location is the membrane. This is an uncharacterized protein from Schizosaccharomyces pombe (strain 972 / ATCC 24843) (Fission yeast).